The primary structure comprises 216 residues: Sarcospan (216 aa).

Over 1–26 (MGRKPSPRAQELPEEEARTCCGCRFP) the chain is Cytoplasmic. Residues 27-47 (LLLALLQLALGIAVTVLGFLM) form a helical membrane-spanning segment. Topologically, residues 48–59 (ASISPSLLVRDT) are extracellular. The helical transmembrane segment at 60 to 80 (PFWAGSIVCVVAYLGLFMLCV) threads the bilayer. Over 81 to 95 (SYQVDERTCVQFSMK) the chain is Cytoplasmic. A helical transmembrane segment spans residues 96–116 (VFYFLLSALGLMVCMLAVAFA). Residues 117–166 (AHHYSLLAQFTCETSLDSCQCKLPSSEPLSRAFVYRDVTDCTSVTGTFKL) are Extracellular-facing. A helical transmembrane segment spans residues 167–187 (FLIIQMVLNLVCGLVCLLACF). The Cytoplasmic segment spans residues 188–216 (VMWKHRYQVFYVGVGLRSLMASDGQLPKA).

Its subcellular location is the cell membrane. It is found in the sarcolemma. It localises to the postsynaptic cell membrane. Component of the dystrophin-glycoprotein complex (DGC), a complex that spans the muscle plasma membrane and forms a link between the F-actin cytoskeleton and the extracellular matrix. Preferentially associates with the sarcoglycan subcomplex of the DGC. In Mus musculus (Mouse), this protein is Sarcospan (Sspn).